We begin with the raw amino-acid sequence, 190 residues long: Inner membrane-spanning protein YciB (190 aa).

A run of 5 helical transmembrane segments spans residues 22–42 (IYVATGALIVATAIQIVLTFA), 50–70 (MQLITFAMVAIFGGMTIFLHD), 76–96 (WKVTIVYAIFAIGLAVSHAMG), 118–138 (INWAWVAFFSFCAGLNVYVAF), and 148–168 (FKVFGLLIATFAYMIATGFYI).

Belongs to the YciB family.

Its subcellular location is the cell inner membrane. In terms of biological role, plays a role in cell envelope biogenesis, maintenance of cell envelope integrity and membrane homeostasis. The chain is Inner membrane-spanning protein YciB from Vibrio campbellii (strain ATCC BAA-1116).